A 662-amino-acid polypeptide reads, in one-letter code: High affinity sulfate transporter 2 (662 aa).

A disordered region spans residues 1-35 (MSQRVSDQAMAEVIAETRTNSSSRRHGGGDDTPSL). 12 helical membrane-spanning segments follow: residues 103–123 (GDFIAGLTIASLCIPQDLAYA), 128–148 (LDPWYGLYSSFVAPLVYAFMG), 153–173 (IAIGPVAVVSLLLGTLLSNEI), 182–202 (LRLAFTATFFAGVTQMLLGVC), 205–225 (GFLIDFLSHAAIVGFMAGAAI), 264–284 (WETILIGLSFLIFLLITKYIA), 291–311 (FWVSAISPMICVIVSTFFVYI), 346–366 (AGVRVGVVAGLVALTEAMAIG), 383–403 (MVAMGTMNIVGSLTSCYVTTG), 420–440 (VSNIVMAIVVLLTLLVITPLF), 447–467 (VLASIIIAAVVNLVNIEAMVL), and 481–501 (GAFFGVIFKSVEIGLLIAVAI). The 124-residue stretch at 532 to 655 (QYPKAEQIPG…LTVADAVATY (124 aa)) folds into the STAS domain.

It belongs to the SLC26A/SulP transporter (TC 2.A.53) family.

It is found in the membrane. High-affinity H(+)/sulfate cotransporter that mediates the uptake of sulfate by plant roots from low concentrations of sulfate in the soil solution. This Stylosanthes hamata (Caribbean stylo) protein is High affinity sulfate transporter 2 (ST2).